A 163-amino-acid polypeptide reads, in one-letter code: Small ribosomal subunit protein uS5 (163 aa).

An S5 DRBM domain is found at Leu-11–Val-74.

The protein belongs to the universal ribosomal protein uS5 family. Part of the 30S ribosomal subunit. Contacts proteins S4 and S8.

With S4 and S12 plays an important role in translational accuracy. Its function is as follows. Located at the back of the 30S subunit body where it stabilizes the conformation of the head with respect to the body. In Syntrophotalea carbinolica (strain DSM 2380 / NBRC 103641 / GraBd1) (Pelobacter carbinolicus), this protein is Small ribosomal subunit protein uS5.